The following is a 181-amino-acid chain: Large ribosomal subunit protein uL5 (181 aa).

The protein belongs to the universal ribosomal protein uL5 family. Part of the 50S ribosomal subunit; part of the 5S rRNA/L5/L18/L25 subcomplex. Contacts the 5S rRNA and the P site tRNA. Forms a bridge to the 30S subunit in the 70S ribosome.

Its function is as follows. This is one of the proteins that bind and probably mediate the attachment of the 5S RNA into the large ribosomal subunit, where it forms part of the central protuberance. In the 70S ribosome it contacts protein S13 of the 30S subunit (bridge B1b), connecting the 2 subunits; this bridge is implicated in subunit movement. Contacts the P site tRNA; the 5S rRNA and some of its associated proteins might help stabilize positioning of ribosome-bound tRNAs. The chain is Large ribosomal subunit protein uL5 from Thermosipho africanus (strain TCF52B).